A 261-amino-acid polypeptide reads, in one-letter code: Short chain dehydrogenase/reductase astE (261 aa).

The NADP(+) site is built by I24, D70, N97, and K131. Catalysis depends on proton donor residues S150 and Y164. NADP(+)-binding residues include Y164, K168, V197, and T199. The Lowers pKa of active site Tyr role is filled by K168.

It belongs to the short-chain dehydrogenases/reductases (SDR) family.

The protein operates within secondary metabolite biosynthesis; terpenoid biosynthesis. Short chain dehydrogenase/reductase; part of the gene cluster that mediates the biosynthesis of astellolides, drimane-type sesquiterpene esters that show antimicrobial, anti-inflammatory, and anti-tumor activities. The first step in astellolide biosynthesis is performed by the sesquiterpene cyclase astC that catalyzes the formation of drimanyl pyrophosphate from farnesyl pyrophosphate. Drimanyl pyrophosphate is then dephosphorylated by the sesquiterpene phosphatase astI to produce drimanyl monophosphate which is further dephosphorylated to drim-8-ene-11-ol by atsK. Drim-8-ene-11-ol is converted to confertifolin, probably by the cytochrome P450 monooxygenase astD and/or the dehydrogenase astE. The cytochrome P450 monooxygenases astB, astF and astJ then hydroxylate confertifolin at C6, C14, or C15 to form trihydroxy confertifolin. The nonribosomal peptide synthetase astA catalyzes ester bond formation between trihydroxy contifolin and benzoic acid (BA) or 4-hydroxy benzoic acid (4HBA), leading to the formation of dideacetyl astellolides A and B, respectively. Finally, the O-acetyltransferase astG converts dideacetyl astellolides A and B into deacetyl astellolides A and B. The sequence is that of Short chain dehydrogenase/reductase astE from Aspergillus oryzae (strain ATCC 42149 / RIB 40) (Yellow koji mold).